Consider the following 280-residue polypeptide: AGNRRPIWIMGHMVNAIGQIDEFVNLGANSIETDVSFDDNANPEYTYHGIPCDSGRNCKKYENFNDFLKGLRSATTPGNSKYQEKLVLVVFDLKTGSLYDNQANDAGKKWAKNLLQHYWNNGNNGGRAYIVLSIPDLNHYPLIKGFKDQLTKDGHPELMDKVGHDFSGNDDISDVGKAYKKAGITGHIWQSDGITNSLPRGLSRVNAAVANRDSANGFINKVYYWTVDKRSTTRDALDAGVDGIMTNYPDVITDVLNEAAYKKKFRVATYDDNPWVTFNK.

His12 is an active-site residue. 2 residues coordinate Mg(2+): Glu32 and Asp34. The Nucleophile role is filled by His48. An intrachain disulfide couples Cys52 to Cys58. Residue Asp92 participates in Mg(2+) binding.

This sequence belongs to the arthropod phospholipase D family. Class I subfamily. Mg(2+) is required as a cofactor. As to expression, expressed by the venom gland.

The protein resides in the secreted. The enzyme catalyses an N-(acyl)-sphingosylphosphocholine = an N-(acyl)-sphingosyl-1,3-cyclic phosphate + choline. The catalysed reaction is an N-(acyl)-sphingosylphosphoethanolamine = an N-(acyl)-sphingosyl-1,3-cyclic phosphate + ethanolamine. It catalyses the reaction a 1-acyl-sn-glycero-3-phosphocholine = a 1-acyl-sn-glycero-2,3-cyclic phosphate + choline. It carries out the reaction a 1-acyl-sn-glycero-3-phosphoethanolamine = a 1-acyl-sn-glycero-2,3-cyclic phosphate + ethanolamine. Functionally, dermonecrotic toxins cleave the phosphodiester linkage between the phosphate and headgroup of certain phospholipids (sphingolipid and lysolipid substrates), forming an alcohol (often choline) and a cyclic phosphate. This toxin acts on sphingomyelin (SM). It may also act on ceramide phosphoethanolamine (CPE), lysophosphatidylcholine (LPC) and lysophosphatidylethanolamine (LPE), but not on lysophosphatidylserine (LPS), and lysophosphatidylglycerol (LPG). It acts by transphosphatidylation, releasing exclusively cyclic phosphate products as second products. Induces dermonecrosis, hemolysis, increased vascular permeability, edema, inflammatory response, and platelet aggregation. This chain is Dermonecrotic toxin LgSicTox-alphaIA1, found in Loxosceles gaucho (Spider).